Consider the following 305-residue polypeptide: Heterogeneous nuclear ribonucleoprotein A0 (305 aa).

Met-1 bears the N-acetylmethionine mark. The RRM 1 domain maps to 7-86 (CKLFIGGLNV…VELKRAVSRE (80 aa)). Residue Ser-68 is modified to Phosphoserine. A Glycyl lysine isopeptide (Lys-Gly) (interchain with G-Cter in SUMO2) cross-link involves residue Lys-80. Ser-84 carries the phosphoserine; by MAPKAPK2 modification. Residues Lys-96, Lys-98, Lys-99, and Lys-106 each participate in a glycyl lysine isopeptide (Lys-Gly) (interchain with G-Cter in SUMO2) cross-link. The RRM 2 domain maps to 98–175 (KKLFVGGLKG…HRVEVKKAVP (78 aa)). An N6-acetyllysine modification is found at Lys-133. Arg-139 carries the omega-N-methylarginine modification. Residues Lys-154, Lys-159, Lys-172, and Lys-176 each participate in a glycyl lysine isopeptide (Lys-Gly) (interchain with G-Cter in SUMO2) cross-link. 2 disordered regions span residues 174–214 (VPKE…KGGG) and 262–305 (QSSY…GSSF). 2 stretches are compositionally biased toward gly residues: residues 181–200 (SGGGGGGSRSSRGGRGGRGR) and 269–281 (KSGGGGGGGGSSW). Ser-188 is subject to Phosphoserine. At Arg-284 the chain carries Omega-N-methylarginine. Over residues 290 to 305 (YRGGYGGGGGYGGSSF) the composition is skewed to gly residues. Residue Arg-291 is modified to Asymmetric dimethylarginine; alternate. Arg-291 bears the Dimethylated arginine; alternate mark. Arg-291 is subject to Omega-N-methylarginine; alternate.

Post-translationally, phosphorylated at Ser-84 by MAPKAPK2 in response to LPS treatment, promoting stabilization of GADD45A mRNA. Arg-291 is dimethylated, probably to asymmetric dimethylarginine.

The protein localises to the nucleus. Its function is as follows. mRNA-binding component of ribonucleosomes. Specifically binds AU-rich element (ARE)-containing mRNAs. Involved in post-transcriptional regulation of cytokines mRNAs. In Homo sapiens (Human), this protein is Heterogeneous nuclear ribonucleoprotein A0 (HNRNPA0).